A 196-amino-acid chain; its full sequence is Thymidine kinase (196 aa).

ATP is bound by residues 9–16 and 85–88; these read GTMNSGKS and DEAQ. The active-site Proton acceptor is the E86. Zn(2+) contacts are provided by C143, C146, C180, and H183.

This sequence belongs to the thymidine kinase family. Homotetramer.

It is found in the cytoplasm. The enzyme catalyses thymidine + ATP = dTMP + ADP + H(+). This is Thymidine kinase from Streptococcus thermophilus (strain CNRZ 1066).